The sequence spans 681 residues: PTS system glucose-specific EIICBA component (681 aa).

The 412-residue stretch at 3–414 (KKLFGQLQRI…LKYKTPGRED (412 aa)) folds into the PTS EIIC type-1 domain. The next 10 helical transmembrane spans lie at 16–36 (LMLP…GTAI), 73–93 (MIFA…AAIA), 126–146 (ILGI…GALA), 170–190 (FVPI…ALIW), 199–219 (AFST…FGFI), 273–293 (FMQG…LAIY), 303–323 (VVAG…ITEP), 328–348 (FLFV…LSFL), 355–375 (VHLG…GVLP), and 383–403 (VIPV…FLIV). The region spanning 425–506 (TELPYAVLEA…QQIMNGQVVE (82 aa)) is the PTS EIIB type-1 domain. The active-site Phosphocysteine intermediate; for EIIB activity is the cysteine 447. One can recognise a PTS EIIA type-1 domain in the interval 551–655 (DQVFSEKMMG…SDITPIIVTQ (105 aa)). The active-site Tele-phosphohistidine intermediate; for EIIA activity is the histidine 603.

It localises to the cell membrane. It catalyses the reaction N(pros)-phospho-L-histidyl-[protein] + D-glucose(out) = D-glucose 6-phosphate(in) + L-histidyl-[protein]. The phosphoenolpyruvate-dependent sugar phosphotransferase system (sugar PTS), a major carbohydrate active transport system, catalyzes the phosphorylation of incoming sugar substrates concomitantly with their translocation across the cell membrane. This system is involved in glucose transport. In Staphylococcus aureus (strain JH9), this protein is PTS system glucose-specific EIICBA component (ptsG).